A 186-amino-acid polypeptide reads, in one-letter code: Elongation factor P (186 aa).

This sequence belongs to the elongation factor P family.

Its subcellular location is the cytoplasm. Its pathway is protein biosynthesis; polypeptide chain elongation. In terms of biological role, involved in peptide bond synthesis. Stimulates efficient translation and peptide-bond synthesis on native or reconstituted 70S ribosomes in vitro. Probably functions indirectly by altering the affinity of the ribosome for aminoacyl-tRNA, thus increasing their reactivity as acceptors for peptidyl transferase. The protein is Elongation factor P of Prochlorococcus marinus (strain MIT 9515).